A 190-amino-acid chain; its full sequence is Large ribosomal subunit protein uL5 (190 aa).

This sequence belongs to the universal ribosomal protein uL5 family. In terms of assembly, part of the 50S ribosomal subunit; part of the 5S rRNA/L5/L18/L25 subcomplex. Contacts the 5S rRNA and the P site tRNA. Forms a bridge to the 30S subunit in the 70S ribosome.

In terms of biological role, this is one of the proteins that bind and probably mediate the attachment of the 5S RNA into the large ribosomal subunit, where it forms part of the central protuberance. In the 70S ribosome it contacts protein S13 of the 30S subunit (bridge B1b), connecting the 2 subunits; this bridge is implicated in subunit movement. Contacts the P site tRNA; the 5S rRNA and some of its associated proteins might help stabilize positioning of ribosome-bound tRNAs. This Bifidobacterium longum (strain DJO10A) protein is Large ribosomal subunit protein uL5.